Reading from the N-terminus, the 593-residue chain is MRVLFPLLEEEIDVSQESLVSDVCASIGLPLNLVCGGKGRCKKCLVNVKENGEMKEVLACQYSVSDGMEIYASREQAASQILETSSNSDLPFDPIVKCYSLNYTDLVTPMCTYDLDVLRKLIPQTIDTPDYSVLKHFSEVYFLEGYERLHVIVSGNRIIDFIPSNEKEKPIYGIAFDIGTTSVVGYLYDITSGCLLNQHSMLNKQIAFGGDVISRIDYAGEGPESLHKIYEAIMETLAEIITQVCKKASIDTKDIYQTVYCGNSTMAHLFLELNPKHLGLAPFLGFCKDAISLKGMDTPLPINPKGTVTFMPLLGGFVGADTTAVLLGLPRDKKMRLMIDLGTNGEIAVGNCDKYYVASTACGPALEGAGLTMGMRGTTGAIEKVGCENGKITYSVIGKTAPQGFCGSGIVDAIAMLFREGLIAKRGNFIKGDALDAHPMKNRFGVDENNQRYFKIVTAGENPEGKDIIITQKDVRAVQLAKAAIYTGCCLLSENYGIKGSDLEEIVIAGAFGNYIDVHNAQFIGLLPKIEGVPVRSIGNGAGTGAQLYLLSKEEAGICNAIPRITTHIELATDPKFVETYMMNTMFGDNVMI.

Residues 1–76 (MRVLFPLLEE…GMEIYASREQ (76 aa)) form the 2Fe-2S ferredoxin-type domain. 4 residues coordinate [2Fe-2S] cluster: C35, C41, C44, and C60.

The cofactor is [2Fe-2S] cluster.

Involved in the degradation of the quaternary amines L-proline betaine and L-carnitine. Component of a corrinoid-dependent methyltransferase system that transfers a methyl group from L-proline betaine or L-carnitine to tetrahydrofolate (THF), forming methyl-THF, a key intermediate in the Wood-Ljungdahl acetogenesis pathway. RamQ is not required for the methyl transfer, but it stimulates reduction of reconstituted MtqC from the Co(II) state to the Co(I) state in vitro. It also stimulates the rate of THF methylation. This chain is Corrinoid activation enzyme RamQ, found in Eubacterium limosum.